The sequence spans 1442 residues: DNA polymerase III PolC-type (1442 aa).

Residues 409-568 (YVIFDIETTG…YDAIVLADVF (160 aa)) enclose the Exonuclease domain.

Belongs to the DNA polymerase type-C family. PolC subfamily.

The protein localises to the cytoplasm. It carries out the reaction DNA(n) + a 2'-deoxyribonucleoside 5'-triphosphate = DNA(n+1) + diphosphate. Its function is as follows. Required for replicative DNA synthesis. This DNA polymerase also exhibits 3' to 5' exonuclease activity. The polypeptide is DNA polymerase III PolC-type (Ureaplasma parvum serovar 3 (strain ATCC 700970)).